The chain runs to 196 residues: Probable GTP-binding protein EngB (196 aa).

The 175-residue stretch at 21-195 folds into the EngB-type G domain; it reads DVSEICLIGR…YELIDKLLGS (175 aa). Residues 29–36, 56–60, 75–78, 142–145, and 174–176 contribute to the GTP site; these read GRSNVGKS, GKTRL, DAPG, TKLD, and ISN. 2 residues coordinate Mg(2+): Ser36 and Thr58.

This sequence belongs to the TRAFAC class TrmE-Era-EngA-EngB-Septin-like GTPase superfamily. EngB GTPase family. Mg(2+) serves as cofactor.

Functionally, necessary for normal cell division and for the maintenance of normal septation. In Mycoplasma mycoides subsp. mycoides SC (strain CCUG 32753 / NCTC 10114 / PG1), this protein is Probable GTP-binding protein EngB.